Here is a 557-residue protein sequence, read N- to C-terminus: TBCC domain-containing protein 1 (557 aa).

The 146-residue stretch at Thr-290–Leu-435 folds into the C-CAP/cofactor C-like domain.

It belongs to the TBCC family.

The protein localises to the cytoplasm. The protein resides in the cytoskeleton. It is found in the microtubule organizing center. Its subcellular location is the centrosome. It localises to the spindle pole. Functionally, plays a role in the regulation of centrosome and Golgi apparatus positioning, with consequences on cell shape and cell migration. The chain is TBCC domain-containing protein 1 (TBCCD1) from Homo sapiens (Human).